Here is a 372-residue protein sequence, read N- to C-terminus: Chloromuconate cycloisomerase (372 aa).

Residue Lys158 is the Proton acceptor of the active site. Residues Asp187, Glu213, and Asp238 each contribute to the Mn(2+) site. Glu316 serves as the catalytic Proton donor.

The protein belongs to the mandelate racemase/muconate lactonizing enzyme family. Mn(2+) serves as cofactor.

It catalyses the reaction 2-[(2R)-2-chloro-2,5-dihydro-5-oxofuryl]acetate = 3-chloro-cis,cis-muconate + H(+). It functions in the pathway aromatic compound metabolism; 3-chlorocatechol degradation. This is Chloromuconate cycloisomerase (tfdDII) from Cupriavidus pinatubonensis (strain JMP 134 / LMG 1197) (Cupriavidus necator (strain JMP 134)).